The sequence spans 497 residues: ATP synthase subunit alpha, chloroplastic (497 aa).

Residue 170-177 (GDRQTGKT) participates in ATP binding.

It belongs to the ATPase alpha/beta chains family. F-type ATPases have 2 components, CF(1) - the catalytic core - and CF(0) - the membrane proton channel. CF(1) has five subunits: alpha(3), beta(3), gamma(1), delta(1), epsilon(1). CF(0) has four main subunits: a, b, b' and c.

The protein resides in the plastid. It is found in the chloroplast thylakoid membrane. The catalysed reaction is ATP + H2O + 4 H(+)(in) = ADP + phosphate + 5 H(+)(out). Produces ATP from ADP in the presence of a proton gradient across the membrane. The alpha chain is a regulatory subunit. This Bigelowiella natans (Pedinomonas minutissima) protein is ATP synthase subunit alpha, chloroplastic.